We begin with the raw amino-acid sequence, 208 residues long: Outer-membrane lipoprotein carrier protein (208 aa).

A signal peptide spans 1-22 (MKKIFTIAALSLPLFCHLPAMA).

Belongs to the LolA family. Monomer.

The protein resides in the periplasm. Participates in the translocation of lipoproteins from the inner membrane to the outer membrane. Only forms a complex with a lipoprotein if the residue after the N-terminal Cys is not an aspartate (The Asp acts as a targeting signal to indicate that the lipoprotein should stay in the inner membrane). This chain is Outer-membrane lipoprotein carrier protein, found in Shewanella pealeana (strain ATCC 700345 / ANG-SQ1).